A 396-amino-acid chain; its full sequence is Agropine synthesis cyclase (396 aa).

It belongs to the peptidase M24B family.

The polypeptide is Agropine synthesis cyclase (ags) (Rhizobium rhizogenes (Agrobacterium rhizogenes)).